A 182-amino-acid polypeptide reads, in one-letter code: Biotin transporter BioY2 (182 aa).

Helical transmembrane passes span 12–32 (IALG…IGIV), 54–74 (FFAI…FTGG), 78–98 (IAVL…MGTL), 111–131 (IPAF…GTLW), and 150–170 (PFVF…LALI).

Belongs to the BioY family. In terms of assembly, in E.coli forms a stable energy-coupling factor (ECF) transporter complex composed of 2 membrane-embedded substrate-binding protein (S component), 2 ATP-binding proteins (A and A' components) and 2 transmembrane proteins (T component), probably with a stoichiometry of 2:1:1:2. May be able to interact with more than 1 S component at a time.

Its subcellular location is the cell membrane. In terms of biological role, probably a biotin-binding protein that interacts with the energy-coupling factor (ECF) ABC-transporter complex. Unlike classic ABC transporters this ECF transporter provides the energy necessary to transport a number of different substrates. The substrates themselves are bound by transmembrane, not extracytoplasmic soluble proteins. This Lactococcus lactis subsp. cremoris (strain MG1363) protein is Biotin transporter BioY2 (bioY2).